Consider the following 66-residue polypeptide: Conotoxin Ca5.2 (66 aa).

Residues Met1 to Ala22 form the signal peptide. A propeptide spanning residues Arg23–Ala48 is cleaved from the precursor. Phe62 carries the phenylalanine amide modification.

Belongs to the conotoxin T superfamily. In terms of processing, contains 2 disulfide bonds that can be either 'C1-C3, C2-C4' or 'C1-C4, C2-C3', since these disulfide connectivities have been observed for conotoxins with cysteine framework V (for examples, see AC P0DQQ7 and AC P81755). Expressed by the venom duct.

It localises to the secreted. The sequence is that of Conotoxin Ca5.2 from Conus caracteristicus (Characteristic cone).